Reading from the N-terminus, the 438-residue chain is MDTDILQKQDSELFEAIAKETGRQTETLELIASENFTSRAVMQACGSVMTNKYAEGYPGKRYYGGCEFVDIAENLARDRAKKLFGCDYVNVQPHSGSSANMAVLFSVLKPGDRIMGLDLSHGGHLTHGSSVNFSGQMYEAHSYGVDRETGCIDMNKVEELALQVRPKLIICGASAYSQGFDVKAFRVIADKVGAFLMADIAHPAGLIAAGLLGNPLPHCHFVTTTTHKTLRGPRGGMIMMGSDFENPMGITIKTKTGSRLKMMSEVMDAEVMPGIQGGPLMHIIAGKAVAFGEALQPAFRDYAAQVIKNAAAMAEKFTELGYKIVSGGTKNHLMLLDLRSKNVTGKVAENLLHSAGITVNKNMVPFDDKSPFVTSGIRVGTPAMTTRGMNEADSVLIAELIDRVITSAEKPDVADLCRSVREEIKALCLRNPIDGYTV.

Residues Leu119 and 123–125 (GHL) contribute to the (6S)-5,6,7,8-tetrahydrofolate site. Lys228 carries the N6-(pyridoxal phosphate)lysine modification. 370–372 (SPF) provides a ligand contact to (6S)-5,6,7,8-tetrahydrofolate.

This sequence belongs to the SHMT family. As to quaternary structure, homodimer. It depends on pyridoxal 5'-phosphate as a cofactor.

It localises to the cytoplasm. The enzyme catalyses (6R)-5,10-methylene-5,6,7,8-tetrahydrofolate + glycine + H2O = (6S)-5,6,7,8-tetrahydrofolate + L-serine. Its pathway is one-carbon metabolism; tetrahydrofolate interconversion. It participates in amino-acid biosynthesis; glycine biosynthesis; glycine from L-serine: step 1/1. In terms of biological role, catalyzes the reversible interconversion of serine and glycine with tetrahydrofolate (THF) serving as the one-carbon carrier. This reaction serves as the major source of one-carbon groups required for the biosynthesis of purines, thymidylate, methionine, and other important biomolecules. Also exhibits THF-independent aldolase activity toward beta-hydroxyamino acids, producing glycine and aldehydes, via a retro-aldol mechanism. The sequence is that of Serine hydroxymethyltransferase from Pelodictyon phaeoclathratiforme (strain DSM 5477 / BU-1).